Here is a 628-residue protein sequence, read N- to C-terminus: MGYEAGQYDVIVIGAGHAGVEAALASARQGAKTLVLTINLDMVAFMPCNPSVGGPAKGIVVREIDALGGEMGRNIDKTHIQMRMLNTGKGPAVRALRAQADKFQYQHEMKNTLEKEPNLTLLQGIVERLIVEDGECRGVITQTGAHYRAKAVVMTTGTYLRGRIILGDLSYSSGPNNQQPSIKLSEHLEELGFDLVRFKTGTPPRVKSDTIDYSKTEIQPGDDVPRAFSYETVEYITDQLPCWLTYTSPETHEIIDSNLHRSPMYSGMIKGTGPRYCPSIEDKVVRFNDKPRHQIFLEPEGRNTQEVYVQGLSTSLPEDVQQRMLATIPGLENVQMMRAGYAIEYDAIVPTQLWPTLETKKITNLYTAGQINGTSGYEEAAGQGIMAGINAGRKALGKEEVILSRSDAYIGVLIDDLVTKGTNEPYRLLTSRAEYRLLLRHDNADLRLTEIGHRIGLISDERYAAFEKKKAAIEAEKKRLHSVIIKPSPENQEYIRSLGGSELKDGVRGTDLMKRPEMNYETVTKLAPPEVPVPQDVAEQVEIQVKYEGYIEKSLQQVEKLKKMENKKIPDRIDYDAIKGIATEARQKLKNVRPLSVAQASRISGVNPADISILLVYLEQGRIAKIAE.

FAD contacts are provided by residues 14 to 19, Val126, and Ser181; that span reads GAGHAG. Residue 273 to 287 participates in NAD(+) binding; sequence GPRYCPSIEDKVVRF. Position 370 (Gln370) interacts with FAD.

Belongs to the MnmG family. Homodimer. Heterotetramer of two MnmE and two MnmG subunits. It depends on FAD as a cofactor.

It is found in the cytoplasm. In terms of biological role, NAD-binding protein involved in the addition of a carboxymethylaminomethyl (cmnm) group at the wobble position (U34) of certain tRNAs, forming tRNA-cmnm(5)s(2)U34. This is tRNA uridine 5-carboxymethylaminomethyl modification enzyme MnmG from Bacillus subtilis (strain 168).